An 82-amino-acid polypeptide reads, in one-letter code: Small ribosomal subunit protein uS17 (82 aa).

This sequence belongs to the universal ribosomal protein uS17 family. As to quaternary structure, part of the 30S ribosomal subunit.

Its function is as follows. One of the primary rRNA binding proteins, it binds specifically to the 5'-end of 16S ribosomal RNA. The sequence is that of Small ribosomal subunit protein uS17 from Aeromonas salmonicida (strain A449).